A 591-amino-acid polypeptide reads, in one-letter code: Aspartate--tRNA(Asp/Asn) ligase (591 aa).

Residue Glu175 participates in L-aspartate binding. Residues 199–202 (QQFK) are aspartate. Positions 221 and 453 each coordinate L-aspartate. 221-223 (RDE) provides a ligand contact to ATP. Residue Glu486 participates in ATP binding. Arg493 is a binding site for L-aspartate. Residue 538–541 (GIDR) coordinates ATP.

It belongs to the class-II aminoacyl-tRNA synthetase family. Type 1 subfamily. As to quaternary structure, homodimer.

The protein resides in the cytoplasm. The catalysed reaction is tRNA(Asx) + L-aspartate + ATP = L-aspartyl-tRNA(Asx) + AMP + diphosphate. In terms of biological role, aspartyl-tRNA synthetase with relaxed tRNA specificity since it is able to aspartylate not only its cognate tRNA(Asp) but also tRNA(Asn). Reaction proceeds in two steps: L-aspartate is first activated by ATP to form Asp-AMP and then transferred to the acceptor end of tRNA(Asp/Asn). This chain is Aspartate--tRNA(Asp/Asn) ligase, found in Cereibacter sphaeroides (strain ATCC 17025 / ATH 2.4.3) (Rhodobacter sphaeroides).